The following is a 221-amino-acid chain: Deoxyribose-phosphate aldolase (221 aa).

The active-site Proton donor/acceptor is the Asp-90. The active-site Schiff-base intermediate with acetaldehyde is Lys-152. Lys-181 functions as the Proton donor/acceptor in the catalytic mechanism.

Belongs to the DeoC/FbaB aldolase family. DeoC type 1 subfamily.

The protein localises to the cytoplasm. The enzyme catalyses 2-deoxy-D-ribose 5-phosphate = D-glyceraldehyde 3-phosphate + acetaldehyde. The protein operates within carbohydrate degradation; 2-deoxy-D-ribose 1-phosphate degradation; D-glyceraldehyde 3-phosphate and acetaldehyde from 2-deoxy-alpha-D-ribose 1-phosphate: step 2/2. Functionally, catalyzes a reversible aldol reaction between acetaldehyde and D-glyceraldehyde 3-phosphate to generate 2-deoxy-D-ribose 5-phosphate. In Exiguobacterium sibiricum (strain DSM 17290 / CCUG 55495 / CIP 109462 / JCM 13490 / 255-15), this protein is Deoxyribose-phosphate aldolase.